The sequence spans 404 residues: Probable tRNA sulfurtransferase (404 aa).

The region spanning H60–D165 is the THUMP domain. ATP is bound by residues M183 to L184, H208 to F209, R265, G287, and Q296.

The protein belongs to the ThiI family.

It is found in the cytoplasm. The catalysed reaction is [ThiI sulfur-carrier protein]-S-sulfanyl-L-cysteine + a uridine in tRNA + 2 reduced [2Fe-2S]-[ferredoxin] + ATP + H(+) = [ThiI sulfur-carrier protein]-L-cysteine + a 4-thiouridine in tRNA + 2 oxidized [2Fe-2S]-[ferredoxin] + AMP + diphosphate. It catalyses the reaction [ThiS sulfur-carrier protein]-C-terminal Gly-Gly-AMP + S-sulfanyl-L-cysteinyl-[cysteine desulfurase] + AH2 = [ThiS sulfur-carrier protein]-C-terminal-Gly-aminoethanethioate + L-cysteinyl-[cysteine desulfurase] + A + AMP + 2 H(+). The protein operates within cofactor biosynthesis; thiamine diphosphate biosynthesis. In terms of biological role, catalyzes the ATP-dependent transfer of a sulfur to tRNA to produce 4-thiouridine in position 8 of tRNAs, which functions as a near-UV photosensor. Also catalyzes the transfer of sulfur to the sulfur carrier protein ThiS, forming ThiS-thiocarboxylate. This is a step in the synthesis of thiazole, in the thiamine biosynthesis pathway. The sulfur is donated as persulfide by IscS. The sequence is that of Probable tRNA sulfurtransferase from Streptococcus agalactiae serotype V (strain ATCC BAA-611 / 2603 V/R).